The following is a 191-amino-acid chain: Early nodulin-like protein 8 (191 aa).

Residues 1–22 (MGVMSLSKTMVVVVLQVMILLG) form the signal peptide. Residues 31 to 133 (TLYKVGDLDA…YQKLLVSVGT (103 aa)) enclose the Phytocyanin domain. Cys87 and Cys121 are joined by a disulfide. Residues Asn104 and Asn108 are each glycosylated (N-linked (GlcNAc...) asparagine). Residue Ser165 is the site of GPI-anchor amidated serine attachment. Positions 166 to 191 (SASSSLISAFSTVAASLACAVVGAIM) are cleaved as a propeptide — removed in mature form.

Belongs to the early nodulin-like (ENODL) family. In terms of tissue distribution, mostly expressed in seedlings and roots, and, to a lower extent, in leaves, flowers, stems and seeds.

The protein resides in the cell membrane. Functionally, may act as a carbohydrate transporter. The polypeptide is Early nodulin-like protein 8 (Arabidopsis thaliana (Mouse-ear cress)).